We begin with the raw amino-acid sequence, 378 residues long: Ribosomal RNA large subunit methyltransferase G (378 aa).

This sequence belongs to the methyltransferase superfamily. RlmG family.

Its subcellular location is the cytoplasm. The enzyme catalyses guanosine(1835) in 23S rRNA + S-adenosyl-L-methionine = N(2)-methylguanosine(1835) in 23S rRNA + S-adenosyl-L-homocysteine + H(+). Specifically methylates the guanine in position 1835 (m2G1835) of 23S rRNA. This is Ribosomal RNA large subunit methyltransferase G from Salmonella agona (strain SL483).